Reading from the N-terminus, the 283-residue chain is Ribosome biogenesis GTPase A (283 aa).

The 165-residue stretch at 14–178 folds into the CP-type G domain; that stretch reads RREVTEKLKL…LLDTPGILWP (165 aa). GTP-binding positions include 58–61, 86–87, 130–135, and Gly-174; these read NKAD, NS, and NVGKST.

This sequence belongs to the TRAFAC class YlqF/YawG GTPase family. MTG1 subfamily. In terms of assembly, interacts with ctc. Interacts with the immature 50S ribosome subunit. 2 molecules of rbgA bind to one 50S subunit.

The protein resides in the cytoplasm. In terms of biological role, essential protein that is required for a late step of 50S ribosomal subunit assembly. Has GTPase activity that is stimulated by interaction with the immature 50S ribosome subunit. Binds to the 23S rRNA. Required for the association of ribosomal proteins rplP and rpmA with the large subunit. The polypeptide is Ribosome biogenesis GTPase A (Bacillus licheniformis (strain ATCC 14580 / DSM 13 / JCM 2505 / CCUG 7422 / NBRC 12200 / NCIMB 9375 / NCTC 10341 / NRRL NRS-1264 / Gibson 46)).